The following is a 265-amino-acid chain: Phosphonates import ATP-binding protein PhnC 1 (265 aa).

In terms of domain architecture, ABC transporter spans 7–252; sequence IEVSNLSKSF…KLNEIYGTAA (246 aa). Residue 39–46 participates in ATP binding; the sequence is GASGSGKS.

The protein belongs to the ABC transporter superfamily. Phosphonates importer (TC 3.A.1.9.1) family. The complex is composed of two ATP-binding proteins (PhnC), two transmembrane proteins (PhnE) and a solute-binding protein (PhnD).

It localises to the cell inner membrane. It carries out the reaction phosphonate(out) + ATP + H2O = phosphonate(in) + ADP + phosphate + H(+). In terms of biological role, part of the ABC transporter complex PhnCDE involved in phosphonates import. Responsible for energy coupling to the transport system. The sequence is that of Phosphonates import ATP-binding protein PhnC 1 from Nostoc sp. (strain PCC 7120 / SAG 25.82 / UTEX 2576).